We begin with the raw amino-acid sequence, 460 residues long: Xyloglucan 6-xylosyltransferase 1 (460 aa).

Residues 1-20 (MIEKCIGAHRFRRLQRFMRQ) lie on the Cytoplasmic side of the membrane. The chain crosses the membrane as a helical; Signal-anchor for type II membrane protein span at residues 21 to 40 (GKVTILCLVLTVIVLRGTIG). The Lumenal segment spans residues 41-460 (AGKFGTPEKD…KAAKLSTTTT (420 aa)). UDP-alpha-D-xylose is bound by residues Gly156 and 227–229 (DSD). Mn(2+) is bound by residues Asp227 and Asp229. His346 provides a ligand contact to substrate. Residues His377, Gly380, and Lys382 each contribute to the UDP-alpha-D-xylose site. His377 contacts Mn(2+). Substrate is bound by residues Lys382 and 389–390 (DY). The N-linked (GlcNAc...) asparagine glycan is linked to Asn431.

This sequence belongs to the glycosyltransferase 34 family. As to quaternary structure, forms homodimer. Interacts with XXT2. Requires Mn(2+) as cofactor.

The protein resides in the golgi apparatus membrane. It catalyses the reaction Transfers an alpha-D-xylosyl residue from UDP-D-xylose to a glucose residue in xyloglucan, forming an alpha-(1-&gt;6)-D-xylosyl-D-glucose linkage.. The protein operates within protein modification; protein glycosylation. Its function is as follows. Xylosyltransferase specific to UDP-D-xylose that accepts both cellopentaose and cellohexaose as substrates, with a better use of cellohexaose, to produce xyloglucan. Adds preferentially the first xylosyl residue to the fourth glucosyl residue from the reducing end of both acceptors. Transfer one xylose mainly to the second glucose residue from the non-reducing end. The acceptor should have a minimum of four glucose residues. In Arabidopsis thaliana (Mouse-ear cress), this protein is Xyloglucan 6-xylosyltransferase 1.